The primary structure comprises 20 residues: Short cationic peptide-4d (20 aa).

Glu-20 is modified (glutamic acid 1-amide).

In terms of tissue distribution, expressed by the venom gland.

It localises to the secreted. The chain is Short cationic peptide-4d from Cupiennius salei (American wandering spider).